A 390-amino-acid chain; its full sequence is ATP-sensitive inward rectifier potassium channel 11 (390 aa).

The Cytoplasmic segment spans residues 1 to 65 (MLSRKGIIPE…LQDVFTTLVD (65 aa)). Residues Asn48 and Arg50 each contribute to the ATP site. Residues 66–92 (LKWPHTLLIFTMSFLCSWLLFAMVWWL) form a helical membrane-spanning segment. At 93–116 (IAFAHGDLAPGEGTNVPCVTSIHS) the chain is on the extracellular side. Cys110 and Cys142 are oxidised to a cystine. Positions 117-133 (FSSAFLFSIEVQVTIGF) form an intramembrane region, discontinuously helical; Pore-forming. K(+) is bound by residues Thr130 and Phe133. The Selectivity filter signature appears at 130 to 135 (TIGFGG). Topologically, residues 134–142 (GGRMVTEEC) are extracellular. The chain crosses the membrane as a helical span at residues 143 to 171 (PLAILILIVQNIVGLMINAIMLGCIFMKT). The Cytoplasmic segment spans residues 172–390 (AQAHRRAETL…KFSISPDSLS (219 aa)). Arg176 serves as a coordination point for a 1,2-diacyl-sn-glycero-3-phospho-(1D-myo-inositol-4,5-bisphosphate). An ATP-binding site is contributed by Tyr330. Residue Thr341 is modified to Phosphothreonine; by MAPK1. Ser385 is subject to Phosphoserine; by MAPK1.

This sequence belongs to the inward rectifier-type potassium channel (TC 1.A.2.1) family. KCNJ11 subfamily. Homotetramer; the homotetramer binds four ATP molecules (one ATP per subunit). Forms an heterooctamer with ABCC8/SUR1; one KCNJ11 homotetramer interacts with four ABCC8/SUR1 molecules. Interacts with ABCC9/SUR2. In terms of processing, phosphorylation by MAPK1 results in changes in channel gating that destabilize the closed states and reduce the ATP sensitivity.

Its subcellular location is the membrane. It carries out the reaction K(+)(in) = K(+)(out). With respect to regulation, KATP channels are regulated by cytoplasmic ATP/ADP ratios; ATP inhibits the channel by closing the pore, while ADP activates the channel. Activated by phosphatidylinositol 4,5-biphosphate (PtdIns(4,5)P2). Inward rectifier potassium channel that forms the pore of ATP-sensitive potassium channels (KATP), regulating potassium permeability as a function of cytoplasmic ATP and ADP concentrations in many different cells. Inward rectifier potassium channels are characterized by a greater tendency to allow potassium to flow into the cell rather than out of it. Their voltage dependence is regulated by the concentration of extracellular potassium; as external potassium is raised, the voltage range of the channel opening shifts to more positive voltages. The inward rectification is mainly due to the blockage of outward current by internal magnesium. Can be blocked by extracellular barium. In pancreatic cells, it forms KATP channels with ABCC8/SUR1. Can form cardiac and smooth muscle-type KATP channels with ABCC9. The protein is ATP-sensitive inward rectifier potassium channel 11 (Kcnj11) of Mus musculus (Mouse).